The following is a 218-amino-acid chain: MGQKINPLGFRLGTTQGHHSLWFSQPKNYSESLQEDQKIRNFIKNYVQKNMITSSGVTGIARIDIQKGIDLIKVIIFMGFPKLLIENRPRATEELQMTLQKELNCVNRKLNIAITRIAKPYGNPKILAEFIAGQLKNRVSFRKAMKKAIELAEKADTKGIQVQIAGRIDGKEIARVEWIREGRVPRQTIRAKIDYCSYPVRTIYGVLGIKIWIFLDEA.

One can recognise a KH type-2 domain in the interval 39 to 118 (IRNFIKNYVQ…KLNIAITRIA (80 aa)).

It belongs to the universal ribosomal protein uS3 family. Part of the 30S ribosomal subunit.

It localises to the plastid. It is found in the chloroplast. This chain is Small ribosomal subunit protein uS3c (rps3), found in Ipomoea purpurea (Common morning glory).